Reading from the N-terminus, the 217-residue chain is Probable nicotinate-nucleotide adenylyltransferase (217 aa).

This sequence belongs to the NadD family.

The catalysed reaction is nicotinate beta-D-ribonucleotide + ATP + H(+) = deamido-NAD(+) + diphosphate. The protein operates within cofactor biosynthesis; NAD(+) biosynthesis; deamido-NAD(+) from nicotinate D-ribonucleotide: step 1/1. Functionally, catalyzes the reversible adenylation of nicotinate mononucleotide (NaMN) to nicotinic acid adenine dinucleotide (NaAD). The protein is Probable nicotinate-nucleotide adenylyltransferase of Dechloromonas aromatica (strain RCB).